The sequence spans 85 residues: Large ribosomal subunit protein bL27 (85 aa).

The disordered stretch occupies residues Met-1 to Arg-20.

This sequence belongs to the bacterial ribosomal protein bL27 family.

In Pasteurella multocida (strain Pm70), this protein is Large ribosomal subunit protein bL27.